A 307-amino-acid polypeptide reads, in one-letter code: MSVTSTVEENHQKNPSTPAAVEEKKKRRWVFWDRRWRRLDYVKFSASFTVHSLALLAPFYFTWSALWVTFLFYTIGGLGITVSYHRNLAHRSFKVPKWLEYLLAYCALLAIQGDPIDWVSTHRYHHQFTDSERDPHSPKEGFWFSHLLWIYDSAYLVSKCGRRANVEDLKRQWFYRFLQKTVLFHILGLGFFLFYLGGMSFVTWGMGVGAALEVHVTCLINSLCHIWGTRTWKTNDTSRNVWWLSVFSFGESWHNNHHAFESSARQGLEWWQIDISWYIVRFFEIIGLATDVKVPTEAQRRRMAIVR.

The segment covering 1 to 17 (MSVTSTVEENHQKNPST) has biased composition (polar residues). A disordered region spans residues 1–21 (MSVTSTVEENHQKNPSTPAAV). Residues 53–73 (LALLAPFYFTWSALWVTFLFY) traverse the membrane as a helical segment. Fe cation is bound by residues histidine 85 and histidine 90. The Histidine box-1 signature appears at 85 to 90 (HRNLAH). The chain crosses the membrane as a helical span at residues 99–119 (LEYLLAYCALLAIQGDPIDWV). Fe cation contacts are provided by histidine 122, histidine 125, and histidine 126. The short motif at 122 to 126 (HRYHH) is the Histidine box-2 element. Helical transmembrane passes span 182 to 202 (VLFH…MSFV) and 204 to 224 (WGMG…NSLC). Residues histidine 225, histidine 254, histidine 257, and histidine 258 each contribute to the Fe cation site. The short motif at 254–258 (HNNHH) is the Histidine box-3 element.

The protein belongs to the fatty acid desaturase type 1 family. The cofactor is Fe cation. In terms of tissue distribution, strongly expressed in flowers, roots, leaves, seedpods, and inflorescence meristems.

It localises to the endoplasmic reticulum membrane. The enzyme catalyses a 1-hexacosanoyl-2-acyl-phosphoglycerolipid + 2 Fe(II)-[cytochrome b5] + O2 + 2 H(+) = a 1-[(17Z)-hexacos-17-enoyl]-2-acyl-phosphoglycerolipid + 2 Fe(III)-[cytochrome b5] + 2 H2O. It catalyses the reaction a 1-tetracosanoyl-2-acyl-phosphoglycerolipid + 2 Fe(II)-[cytochrome b5] + O2 + 2 H(+) = a 1-[(15Z)-tetracos-15-enoyl]-2-acyl-phosphoglycerolipid + 2 Fe(III)-[cytochrome b5] + 2 H2O. The protein operates within lipid metabolism; polyunsaturated fatty acid biosynthesis. Involved in delta-9 desaturation of fatty acids. Plays a role in the production of very-long-chain monounsaturated fatty acids (VLCMUFAs) in seed lipids and in membrane phospholipids and sphingolipids. Acts as C-16:0 desaturase for monogalactosyl diacylglycerol (MGDG) and phosphatidylglycerol (PG). Is an essential component for cold adaptation. Is essential to adjust the acyl composition of organelle membrane lipid composition in response to cold stress. This is Delta-9 acyl-lipid desaturase 2 from Arabidopsis thaliana (Mouse-ear cress).